Reading from the N-terminus, the 175-residue chain is NADH-ubiquinone oxidoreductase chain 6 (175 aa).

6 consecutive transmembrane segments (helical) span residues 1–21 (MMTYVVFILSIVFVIGLIGSP), 25–45 (SPIYGGLGLIVSGGAGCGMVL), 47–67 (FGGSFLGLMVFLVYLGGMLVV), 88–108 (VVLGAFLLGLMMEFLAVLYVL), 115–137 (LVFKFSGLGDWVVYGMSDFGVFS), and 149–169 (YGVWLVVVTGWSLFVGVVVIM).

This sequence belongs to the complex I subunit 6 family. Core subunit of respiratory chain NADH dehydrogenase (Complex I) which is composed of 45 different subunits.

Its subcellular location is the mitochondrion inner membrane. The enzyme catalyses a ubiquinone + NADH + 5 H(+)(in) = a ubiquinol + NAD(+) + 4 H(+)(out). In terms of biological role, core subunit of the mitochondrial membrane respiratory chain NADH dehydrogenase (Complex I) which catalyzes electron transfer from NADH through the respiratory chain, using ubiquinone as an electron acceptor. Essential for the catalytic activity and assembly of complex I. The polypeptide is NADH-ubiquinone oxidoreductase chain 6 (MT-ND6) (Hippopotamus amphibius (Hippopotamus)).